The following is a 214-amino-acid chain: Large ribosomal subunit protein uL4c (214 aa).

The segment at 42–81 is disordered; sequence VKQSNEKRQGSANTKTRSEVRGGGRKPWRQKGTGRARAGS. Basic residues predominate over residues 64–75; the sequence is GGRKPWRQKGTG.

It belongs to the universal ribosomal protein uL4 family. In terms of assembly, part of the 50S ribosomal subunit.

The protein localises to the plastid. It localises to the chloroplast. Its function is as follows. Probably binds the 23S rRNA. This is Large ribosomal subunit protein uL4c (rpl4) from Pyropia yezoensis (Susabi-nori).